Here is a 149-residue protein sequence, read N- to C-terminus: Thioredoxin-like protein 4B (149 aa).

The protein belongs to the DIM1 family. As to quaternary structure, homodimer. Interacts with the U5-102 kDa protein subunit of the spliceosome.

Its subcellular location is the nucleus. Essential role in pre-mRNA splicing. Required in cell cycle progression for S/G(2) transition. The polypeptide is Thioredoxin-like protein 4B (Txnl4b) (Mus musculus (Mouse)).